Here is a 335-residue protein sequence, read N- to C-terminus: DNA-directed RNA polymerase subunit alpha (335 aa).

Positions 1–233 (MTRTANEFLT…QQIAIFVDLQ (233 aa)) are alpha N-terminal domain (alpha-NTD). The alpha C-terminal domain (alpha-CTD) stretch occupies residues 247–335 (VDPILLRPVD…MDDRFAYRSR (89 aa)).

It belongs to the RNA polymerase alpha chain family. In terms of assembly, homodimer. The RNAP catalytic core consists of 2 alpha, 1 beta, 1 beta' and 1 omega subunit. When a sigma factor is associated with the core the holoenzyme is formed, which can initiate transcription.

The enzyme catalyses RNA(n) + a ribonucleoside 5'-triphosphate = RNA(n+1) + diphosphate. DNA-dependent RNA polymerase catalyzes the transcription of DNA into RNA using the four ribonucleoside triphosphates as substrates. The polypeptide is DNA-directed RNA polymerase subunit alpha (Acinetobacter baumannii (strain AB307-0294)).